A 270-amino-acid polypeptide reads, in one-letter code: MRLIIEPNYEQLSKWAANYVAAKIKAANPTAEKPFVLGLPTGSSPLGMYKNLIELNKQGVVSFQNVITFNMDEYVGLPKDHPESYHSFMWNNFFSHIDIKPENVNILNGNAEDLEAECASYEARMKAVGGVDLFLGGIGPDGHIAFNEPGSSLSSRTRIKTLTTDTIIANSRFFDNDVNKVPKTSVTVGVGTVLDAKEVLIMVNGHNKARALQQAVEGAVNQMWTITALQLHPKGIIVCDEAACADLKVGTYNYFKDIEKDHLCPCSLLK.

Aspartate 72 (proton acceptor; for enolization step) is an active-site residue. Catalysis depends on aspartate 141, which acts as the For ring-opening step. Histidine 143 functions as the Proton acceptor; for ring-opening step in the catalytic mechanism. Glutamate 148 (for ring-opening step) is an active-site residue.

This sequence belongs to the glucosamine/galactosamine-6-phosphate isomerase family. NagB subfamily.

It catalyses the reaction alpha-D-glucosamine 6-phosphate + H2O = beta-D-fructose 6-phosphate + NH4(+). It participates in amino-sugar metabolism; N-acetylneuraminate degradation; D-fructose 6-phosphate from N-acetylneuraminate: step 5/5. Allosterically activated by N-acetylglucosamine 6-phosphate (GlcNAc6P). Catalyzes the reversible isomerization-deamination of glucosamine 6-phosphate (GlcN6P) to form fructose 6-phosphate (Fru6P) and ammonium ion. The polypeptide is Glucosamine-6-phosphate deaminase (Parabacteroides distasonis (strain ATCC 8503 / DSM 20701 / CIP 104284 / JCM 5825 / NCTC 11152)).